The following is a 772-amino-acid chain: Endoplasmic reticulum membrane sensor NFE2L1 (772 aa).

The chain crosses the membrane as a helical; Signal-anchor for type II membrane protein span at residues 7–24 (YLTEGLLQFTILLSLIGV). The segment at 108–148 (DPEGSVSGSQPNSGLALESSSGLQDVTGPDNGVRESETEQG) is disordered. Over residues 113-131 (VSGSQPNSGLALESSSGLQ) the composition is skewed to polar residues. The segment at 191-199 (VFDYSHRQK) is cholesterol recognition/amino acid consensus (CRAC) region. The N-linked (GlcNAc...) asparagine glycan is linked to asparagine 348. The segment at 379 to 383 (SPEVE) is CPD. Residues asparagine 412 and asparagine 423 are each glycosylated (N-linked (GlcNAc...) asparagine). Positions 470–532 (EEEFDSDSGL…AVGYSSDSET (63 aa)) are disordered. Positions 476 to 480 (DSGLS) match the Destruction motif motif. The span at 476–523 (DSGLSLDSSHSPSSLSSSEGSSSSSSSSSSSSSSASSSASSSFSEEGA) shows a compositional bias: low complexity. Position 528 is a phosphoserine; by CK2 (serine 528). Residue serine 599 is modified to Phosphoserine; by PKA. The bZIP domain maps to 654–717 (LIRDIRRRGK…RQMKQKVQSL (64 aa)). The tract at residues 656-675 (RDIRRRGKNKMAAQNCRKRK) is basic motif. The segment at 682-696 (LERDVEDLQRDKARL) is leucine-zipper. The segment at 753–772 (RTMADQQARRQERKPKDRRK) is disordered. The Nuclear localization signal motif lies at 761-768 (RRQERKPK). The segment covering 763-772 (QERKPKDRRK) has biased composition (basic residues).

This sequence belongs to the bZIP family. CNC subfamily. In terms of assembly, interacts with KEAP1. Interacts (via CPD region) with FBXW7; leading to its ubiquitination and degradation. Interacts with SYVN1/HRD1; leading to its ubiquitination and degradation. Interacts (when ubiquitinated) with DDI2; leading to its cleavage. As to quaternary structure, interacts (via the bZIP domain) with small MAF protein (MAFF, MAFG or MAFK); required for binding to antioxidant response elements (AREs) on DNA. Interacts (via Destruction motif) with BTRC; leading to its ubiquitination and degradation. Interacts with CEBPB; the heterodimer represses expression of DSPP during odontoblast differentiation. Interacts with MOTS-c, a peptide produced by the mitochondrially encoded 12S rRNA MT-RNR1. In terms of processing, cleaved at Leu-104 by the aspartyl protease DDI2 following retrotranslocation, releasing the protein from the endoplasmic reticulum membrane and forming the transcription factor NRF1 that translocates into the nucleus. Ubiquitination is prerequisite for cleavage by aspartyl protease DDI2. Post-translationally, N-glycosylated in normal conditions, when it has a single-pass type II membrane protein topology, with the DNA-binding domain facing the endoplasmic reticulum lumen. Deglycosylated during retrotranslocation to the cytosolic side of the membrane, to have a single-pass type III membrane protein topology with the major part of the protein facing the cytosol. Ubiquitinated by the SCF(FBXW7) complex and SYVN1/HRD1, leading to its degradation by the proteasome. Ubiquitinated during retrotranslocation to the cytosolic side of the membrane: ubiquitination does not lead to degradation and is required for processing by the aspartyl protease DDI2 and subsequent release from the endoplasmic reticulum membrane. In terms of processing, phosphorylation by CK2 at Ser-528 inhibits transcription factor activity, possibly by affecting DNA-binding activity. Phosphorylation at Ser-599 is required for interaction with CEBPB. Post-translationally, ubiquitinated by the SCF(BTRC) complex in the nucleus, leading to its degradation by the proteasome.

It localises to the endoplasmic reticulum membrane. It is found in the nucleus. Endoplasmic reticulum membrane sensor that translocates into the nucleus in response to various stresses to act as a transcription factor. Constitutes a precursor of the transcription factor NRF1. Able to detect various cellular stresses, such as cholesterol excess, oxidative stress or proteasome inhibition. In response to stress, it is released from the endoplasmic reticulum membrane following cleavage by the protease DDI2 and translocates into the nucleus to form the transcription factor NRF1. Acts as a key sensor of cholesterol excess: in excess cholesterol conditions, the endoplasmic reticulum membrane form of the protein directly binds cholesterol via its CRAC motif, preventing cleavage and release of the transcription factor NRF1, thereby allowing expression of genes promoting cholesterol removal, such as CD36. Involved in proteasome homeostasis: in response to proteasome inhibition, it is released from the endoplasmic reticulum membrane, translocates to the nucleus and activates expression of genes encoding proteasome subunits. Functionally, CNC-type bZIP family transcription factor that translocates to the nucleus and regulates expression of target genes in response to various stresses. Heterodimerizes with small-Maf proteins (MAFF, MAFG or MAFK) and binds DNA motifs including the antioxidant response elements (AREs), which regulate expression of genes involved in oxidative stress response. Activates or represses expression of target genes, depending on the context. Plays a key role in cholesterol homeostasis by acting as a sensor of cholesterol excess: in low cholesterol conditions, translocates into the nucleus and represses expression of genes involved in defense against cholesterol excess, such as CD36. In excess cholesterol conditions, the endoplasmic reticulum membrane form of the protein directly binds cholesterol via its CRAC motif, preventing cleavage and release of the transcription factor NRF1, thereby allowing expression of genes promoting cholesterol removal. Critical for redox balance in response to oxidative stress: acts by binding the AREs motifs on promoters and mediating activation of oxidative stress response genes, such as GCLC, GCLM, GSS, MT1 and MT2. Plays an essential role during fetal liver hematopoiesis: probably has a protective function against oxidative stress and is involved in lipid homeostasis in the liver. Involved in proteasome homeostasis: in response to proteasome inhibition, mediates the 'bounce-back' of proteasome subunits by translocating into the nucleus and activating expression of genes encoding proteasome subunits. Also involved in regulating glucose flux. Together with CEBPB; represses expression of DSPP during odontoblast differentiation. In response to ascorbic acid induction, activates expression of SP7/Osterix in osteoblasts. The polypeptide is Endoplasmic reticulum membrane sensor NFE2L1 (Pongo abelii (Sumatran orangutan)).